Here is a 333-residue protein sequence, read N- to C-terminus: Gap junction alpha-4 protein (333 aa).

Residues 1-20 (MGDWGFLEKLLDQVQEHSTV) lie on the Cytoplasmic side of the membrane. The chain crosses the membrane as a helical span at residues 21 to 40 (VGKIWLTVLFIFRILILGLA). The Extracellular portion of the chain corresponds to 41–76 (GESVWGDEQSDFECNTAQPGCTNVCYDQAFPISHIR). Residues 77 to 99 (YWVLQFLFVSTPTLIYLGHVIYL) form a helical membrane-spanning segment. Topologically, residues 100-148 (SRREERLRQKEGELRALPSKDLHVERALAAIEHQMAKISVAEDGRLRIR) are cytoplasmic. Residues 149–171 (GALMGTYVVSVLCKSVLEAGFLY) form a helical membrane-spanning segment. Over 172–208 (GQWRLYGWTMEPVFVCQRAPCPHIVDCYVSRPTEKTI) the chain is Extracellular. A helical transmembrane segment spans residues 209–231 (FIIFMLVVGVISLVLNLLELVHL). Topologically, residues 232–333 (LCRCVSREIK…NSSASKKQYV (102 aa)) are cytoplasmic. The interval 292-333 (ANLTTEERLTSSRPPPFVNTAPQGGRKSPSRPNSSASKKQYV) is disordered. Over residues 321–333 (SRPNSSASKKQYV) the composition is skewed to polar residues.

This sequence belongs to the connexin family. Alpha-type (group II) subfamily. In terms of assembly, a connexon is composed of a hexamer of connexins. In terms of tissue distribution, highly expressed in lung.

It localises to the cell membrane. The protein resides in the cell junction. The protein localises to the gap junction. Functionally, one gap junction consists of a cluster of closely packed pairs of transmembrane channels, the connexons, through which materials of low MW diffuse from one cell to a neighboring cell. The sequence is that of Gap junction alpha-4 protein (Gja4) from Mus musculus (Mouse).